The primary structure comprises 491 residues: Cobyric acid synthase (491 aa).

One can recognise a GATase cobBQ-type domain in the interval P249–F439. C329 (nucleophile) is an active-site residue. H431 is an active-site residue.

Belongs to the CobB/CobQ family. CobQ subfamily.

It participates in cofactor biosynthesis; adenosylcobalamin biosynthesis. Catalyzes amidations at positions B, D, E, and G on adenosylcobyrinic A,C-diamide. NH(2) groups are provided by glutamine, and one molecule of ATP is hydrogenolyzed for each amidation. This Clostridium tetani (strain Massachusetts / E88) protein is Cobyric acid synthase.